Reading from the N-terminus, the 465-residue chain is Probable Xaa-Pro aminopeptidase PEPP (465 aa).

Positions 259, 270, 395, and 435 each coordinate Mn(2+).

This sequence belongs to the peptidase M24B family. The cofactor is Mn(2+).

It carries out the reaction Release of any N-terminal amino acid, including proline, that is linked to proline, even from a dipeptide or tripeptide.. Its function is as follows. Catalyzes the removal of a penultimate prolyl residue from the N-termini of peptides. The protein is Probable Xaa-Pro aminopeptidase PEPP (PEPP) of Pyricularia oryzae (strain 70-15 / ATCC MYA-4617 / FGSC 8958) (Rice blast fungus).